A 177-amino-acid chain; its full sequence is Large ribosomal subunit protein uL10 (177 aa).

Belongs to the universal ribosomal protein uL10 family. In terms of assembly, part of the ribosomal stalk of the 50S ribosomal subunit. The N-terminus interacts with L11 and the large rRNA to form the base of the stalk. The C-terminus forms an elongated spine to which L12 dimers bind in a sequential fashion forming a multimeric L10(L12)X complex.

Forms part of the ribosomal stalk, playing a central role in the interaction of the ribosome with GTP-bound translation factors. This Variovorax paradoxus (strain S110) protein is Large ribosomal subunit protein uL10.